A 134-amino-acid chain; its full sequence is Profilin-3 (134 aa).

Cys13 and Cys118 are joined by a disulfide. Positions 84–100 match the Involved in PIP2 interaction motif; the sequence is AVIRGKKGSGGITIKKT. At Thr114 the chain carries Phosphothreonine.

This sequence belongs to the profilin family. In terms of assembly, occurs in many kinds of cells as a complex with monomeric actin in a 1:1 ratio. In terms of processing, phosphorylated by MAP kinases.

The protein localises to the cytoplasm. Its subcellular location is the cytoskeleton. In terms of biological role, binds to actin and affects the structure of the cytoskeleton. At high concentrations, profilin prevents the polymerization of actin, whereas it enhances it at low concentrations. This Olea europaea (Common olive) protein is Profilin-3.